The primary structure comprises 134 residues: MISSKPSKQRKLVYNLPNHLRYKLLTARLSEDLEKQYGIKRISIRKGDSVKLMRGSQVGYEGKVVEVDRKRGRVAIEGLTKKKADGTPVYVWVHASKVIITKLDTGDKERMDAIERKRKMREEYFSKKSPKEVS.

Belongs to the universal ribosomal protein uL24 family. As to quaternary structure, part of the 50S ribosomal subunit.

Its function is as follows. One of two assembly initiator proteins, it binds directly to the 5'-end of the 23S rRNA, where it nucleates assembly of the 50S subunit. Located at the polypeptide exit tunnel on the outside of the subunit. This is Large ribosomal subunit protein uL24 from Sulfolobus acidocaldarius (strain ATCC 33909 / DSM 639 / JCM 8929 / NBRC 15157 / NCIMB 11770).